A 183-amino-acid chain; its full sequence is Potassium-transporting ATPase KdpC subunit (183 aa).

Residues 11-31 (LALLMTLLTGVLYPLAVTGVA) traverse the membrane as a helical segment.

This sequence belongs to the KdpC family. In terms of assembly, the system is composed of three essential subunits: KdpA, KdpB and KdpC.

It is found in the cell inner membrane. Part of the high-affinity ATP-driven potassium transport (or Kdp) system, which catalyzes the hydrolysis of ATP coupled with the electrogenic transport of potassium into the cytoplasm. This subunit acts as a catalytic chaperone that increases the ATP-binding affinity of the ATP-hydrolyzing subunit KdpB by the formation of a transient KdpB/KdpC/ATP ternary complex. The polypeptide is Potassium-transporting ATPase KdpC subunit (Pseudomonas putida (strain GB-1)).